A 1170-amino-acid chain; its full sequence is Disease resistance protein LAZ5 (1170 aa).

The TIR domain occupies 10–172 (ESWQVFINFR…KIIDSIKKVL (163 aa)). The active site involves glutamate 84. The interval 193-219 (EAKNVDTFSPNSSDFPSTSIDDDLSIN) is disordered. The span at 198 to 219 (DTFSPNSSDFPSTSIDDDLSIN) shows a compositional bias: polar residues. The region spanning 261 to 513 (RLKEMEEKLD…DVACFFKSEN (253 aa)) is the NB-ARC domain. LRR repeat units lie at residues 595-616 (MENV…TFDG), 622-645 (MCNL…IFKF), 646-670 (DTVR…PWEK), 677-700 (PENL…VKDT), 723-747 (AKNL…MENM), 761-785 (LTCL…KLEE), 790-813 (SENL…AGDL), 815-837 (RLVV…LGKQ), 838-861 (KALQ…VKDM), 862-885 (KHLR…SLKC), 888-904 (LSRN…LKDF), and 905-930 (SNLK…CLEY).

It carries out the reaction NAD(+) + H2O = ADP-D-ribose + nicotinamide + H(+). TIR-NB-LRR receptor-like protein that may play a role in plant innate immunity. May trigger hypersensitive programmed cell death in response to pathogen attack. Involved in tolerance to tobacco ringspot virus (TRSV). This chain is Disease resistance protein LAZ5, found in Arabidopsis thaliana (Mouse-ear cress).